Here is a 623-residue protein sequence, read N- to C-terminus: uncharacterized protein (623 aa).

A coiled-coil region spans residues 256-351 (AEEKLLSKNK…EEIHGLKKKN (96 aa)). Disordered regions lie at residues 417-485 (NRRN…SPSS) and 497-536 (ALSSNGKKKTTRAIEDEEEEEDVKPENSNNNKKPENECAT). The span at 422–431 (LESVPFNTLS) shows a compositional bias: polar residues. The segment covering 452–481 (ELKKPAESYGDETKKPNQHNKDGSIDEKPK) has biased composition (basic and acidic residues).

This is an uncharacterized protein from Arabidopsis thaliana (Mouse-ear cress).